A 187-amino-acid chain; its full sequence is Putative manganese efflux pump MntP (187 aa).

A run of 6 helical transmembrane segments spans residues 8-28 (FLSIGLAIDAFAVSLSSGFII), 39-59 (IALFFGIFQGVMPLIGWLTGL), 65-85 (LANFDHWIAFILLAAIGGKMI), 106-126 (LFALAIATSIDALAAGLGLSV), 131-151 (ILLACTLIASITFSLSFIGVF), and 166-186 (ILGGITLIGIGTKILVEGLII).

The protein belongs to the MntP (TC 9.B.29) family.

It localises to the cell inner membrane. Functionally, probably functions as a manganese efflux pump. This Rippkaea orientalis (strain PCC 8801 / RF-1) (Cyanothece sp. (strain PCC 8801)) protein is Putative manganese efflux pump MntP.